Here is a 167-residue protein sequence, read N- to C-terminus: Leptin (167 aa).

Residues 1–21 (MCWRPLCRFLWLWSYLSYVQA) form the signal peptide. A disulfide bridge connects residues C117 and C167.

This sequence belongs to the leptin family.

It is found in the secreted. Its function is as follows. Key player in the regulation of energy balance and body weight control. Once released into the circulation, has central and peripheral effects by binding LEPR, found in many tissues, which results in the activation of several major signaling pathways. In the hypothalamus, acts as an appetite-regulating factor that induces a decrease in food intake and an increase in energy consumption by inducing anorexinogenic factors and suppressing orexigenic neuropeptides, also regulates bone mass and secretion of hypothalamo-pituitary-adrenal hormones. In the periphery, increases basal metabolism, influences reproductive function, regulates pancreatic beta-cell function and insulin secretion, is pro-angiogenic for endothelial cell and affects innate and adaptive immunity. In the arcuate nucleus of the hypothalamus, activates by depolarization POMC neurons inducing FOS and SOCS3 expression to release anorexigenic peptides and inhibits by hyperpolarization NPY neurons inducing SOCS3 with a consequent reduction on release of orexigenic peptides. In addition to its known satiety inducing effect, has a modulatory role in nutrient absorption. In the intestine, reduces glucose absorption by enterocytes by activating PKC and leading to a sequential activation of p38, PI3K and ERK signaling pathways which exerts an inhibitory effect on glucose absorption. Acts as a growth factor on certain tissues, through the activation of different signaling pathways increases expression of genes involved in cell cycle regulation such as CCND1, via JAK2-STAT3 pathway, or VEGFA, via MAPK1/3 and PI3K-AKT1 pathways. May also play an apoptotic role via JAK2-STAT3 pathway and up-regulation of BIRC5 expression. Pro-angiogenic, has mitogenic activity on vascular endothelial cells and plays a role in matrix remodeling by regulating the expression of matrix metalloproteinases (MMPs) and tissue inhibitors of metalloproteinases (TIMPs). In innate immunity, modulates the activity and function of neutrophils by increasing chemotaxis and the secretion of oxygen radicals. Increases phagocytosis by macrophages and enhances secretion of pro-inflammatory mediators. Increases cytotoxic ability of NK cells. Plays a pro-inflammatory role, in synergy with IL1B, by inducing NOS2 which promotes the production of IL6, IL8 and Prostaglandin E2, through a signaling pathway that involves JAK2, PI3K, MAP2K1/MEK1 and MAPK14/p38. In adaptive immunity, promotes the switch of memory T-cells towards T helper-1 cell immune responses. Increases CD4(+)CD25(-) T cells proliferation and reduces autophagy during TCR (T cell receptor) stimulation, through MTOR signaling pathway activation and BCL2 up-regulation. The polypeptide is Leptin (Lep) (Mus musculus (Mouse)).